Reading from the N-terminus, the 415-residue chain is 3-isopropylmalate dehydratase large subunit (415 aa).

[4Fe-4S] cluster is bound by residues Cys-295, Cys-353, and Cys-356.

It belongs to the aconitase/IPM isomerase family. LeuC type 2 subfamily. Heterodimer of LeuC and LeuD. It depends on [4Fe-4S] cluster as a cofactor.

It carries out the reaction (2R,3S)-3-isopropylmalate = (2S)-2-isopropylmalate. The protein operates within amino-acid biosynthesis; L-leucine biosynthesis; L-leucine from 3-methyl-2-oxobutanoate: step 2/4. Functionally, catalyzes the isomerization between 2-isopropylmalate and 3-isopropylmalate, via the formation of 2-isopropylmaleate. This Pyrobaculum aerophilum (strain ATCC 51768 / DSM 7523 / JCM 9630 / CIP 104966 / NBRC 100827 / IM2) protein is 3-isopropylmalate dehydratase large subunit.